We begin with the raw amino-acid sequence, 729 residues long: Fatty acid oxidation complex subunit alpha (729 aa).

The tract at residues Met1–Lys189 is enoyl-CoA hydratase/isomerase. Residue Asp296 participates in substrate binding. The tract at residues Glu311–Ala729 is 3-hydroxyacyl-CoA dehydrogenase. NAD(+) is bound by residues Met324, Asp343, Val400–Glu402, Lys407, and Ser429. Residue His450 is the For 3-hydroxyacyl-CoA dehydrogenase activity of the active site. Asn453 lines the NAD(+) pocket. Substrate is bound by residues Asn500 and Tyr660. A disordered region spans residues Arg708–Ala729.

In the N-terminal section; belongs to the enoyl-CoA hydratase/isomerase family. It in the C-terminal section; belongs to the 3-hydroxyacyl-CoA dehydrogenase family. In terms of assembly, heterotetramer of two alpha chains (FadB) and two beta chains (FadA).

The enzyme catalyses a (3S)-3-hydroxyacyl-CoA + NAD(+) = a 3-oxoacyl-CoA + NADH + H(+). It catalyses the reaction a (3S)-3-hydroxyacyl-CoA = a (2E)-enoyl-CoA + H2O. It carries out the reaction a 4-saturated-(3S)-3-hydroxyacyl-CoA = a (3E)-enoyl-CoA + H2O. The catalysed reaction is (3S)-3-hydroxybutanoyl-CoA = (3R)-3-hydroxybutanoyl-CoA. The enzyme catalyses a (3Z)-enoyl-CoA = a 4-saturated (2E)-enoyl-CoA. It catalyses the reaction a (3E)-enoyl-CoA = a 4-saturated (2E)-enoyl-CoA. The protein operates within lipid metabolism; fatty acid beta-oxidation. Involved in the aerobic and anaerobic degradation of long-chain fatty acids via beta-oxidation cycle. Catalyzes the formation of 3-oxoacyl-CoA from enoyl-CoA via L-3-hydroxyacyl-CoA. It can also use D-3-hydroxyacyl-CoA and cis-3-enoyl-CoA as substrate. This is Fatty acid oxidation complex subunit alpha from Escherichia coli O81 (strain ED1a).